A 263-amino-acid chain; its full sequence is MLATIDPIALRLGPISIHWYAICIVSGLLLAVYLAQRLAPEKGINPEHILDFILLAFPIAIVGARLYYVIFQWSYYSQNPSEIFAIWNGGIAIYGGLIAGAAVLYWFAKRHAIAVLDFLDIAAPGVMIAQSIGRWGNFVNQEAYGKAVSQLNYLPEIIRQQMFIDGSYRVPTFLYESLWNLVGFSIILGLRYFNKGLRQGDVTSFYLIWYGLGRFVIEGMRTDSLMFVGLRVSQWVSISIIILGAVLLYFRKQRQKADYKMKN.

The next 4 membrane-spanning stretches (helical) occupy residues 15 to 35 (ISIH…VYLA), 52 to 72 (FILL…VIFQ), 83 to 103 (IFAI…GAAV), and 112 to 132 (AIAV…AQSI). A 1,2-diacyl-sn-glycero-3-phospho-(1'-sn-glycerol) is bound at residue Arg-134. The next 3 membrane-spanning stretches (helical) occupy residues 170-190 (VPTF…ILGL), 200-220 (GDVT…IEGM), and 227-247 (FVGL…GAVL).

It belongs to the Lgt family.

It is found in the cell membrane. The catalysed reaction is L-cysteinyl-[prolipoprotein] + a 1,2-diacyl-sn-glycero-3-phospho-(1'-sn-glycerol) = an S-1,2-diacyl-sn-glyceryl-L-cysteinyl-[prolipoprotein] + sn-glycerol 1-phosphate + H(+). It participates in protein modification; lipoprotein biosynthesis (diacylglyceryl transfer). Its function is as follows. Catalyzes the transfer of the diacylglyceryl group from phosphatidylglycerol to the sulfhydryl group of the N-terminal cysteine of a prolipoprotein, the first step in the formation of mature lipoproteins. In Streptococcus thermophilus (strain ATCC BAA-491 / LMD-9), this protein is Phosphatidylglycerol--prolipoprotein diacylglyceryl transferase.